We begin with the raw amino-acid sequence, 93 residues long: Large ribosomal subunit protein uL23cz/uL23cy (93 aa).

It belongs to the universal ribosomal protein uL23 family. Part of the 50S ribosomal subunit.

The protein resides in the plastid. It is found in the chloroplast. Functionally, binds to 23S rRNA. The sequence is that of Large ribosomal subunit protein uL23cz/uL23cy (rpl23-A) from Gossypium barbadense (Sea Island cotton).